A 297-amino-acid chain; its full sequence is MDERALVFSDGLTDPQISQVLALAEAATRHDGVAPLSEQALLTLRAGRSRSLLSLEDGVIAGYAHLDPAPDGAGASGEVVVHPGRRRRGHGRALLRALRERARGPLRVWAHGDLAPAAALAAAEGMARVRVLLQMRRPLQDSPLPEVTVPDGVTIRTFEPGRDETAWLRVNGRAFADHPEQGAWTLEDLRARQAEPWFDPAGLFLAERDGRLIGFHWTKVHPDPIGEVYVVGVDPSAQGLGLGRVLTLIGLHHLRDRGLPAVMLYVDESNRPALRLYESLGFTRYAVDVMYQSPPPH.

N-acetyltransferase domains lie at 7–156 (VFSD…VTIR) and 153–297 (VTIR…PPPH). Glu38 lines the 1D-myo-inositol 2-(L-cysteinylamino)-2-deoxy-alpha-D-glucopyranoside pocket. 79–81 (VVV) is an acetyl-CoA binding site. 3 residues coordinate 1D-myo-inositol 2-(L-cysteinylamino)-2-deoxy-alpha-D-glucopyranoside: Glu180, Lys219, and Glu227. Residues 231 to 233 (VGV) and 238 to 244 (QGLGLGR) contribute to the acetyl-CoA site. Residue Tyr265 coordinates 1D-myo-inositol 2-(L-cysteinylamino)-2-deoxy-alpha-D-glucopyranoside. 270–275 (NRPALR) is an acetyl-CoA binding site.

This sequence belongs to the acetyltransferase family. MshD subfamily. As to quaternary structure, monomer.

It carries out the reaction 1D-myo-inositol 2-(L-cysteinylamino)-2-deoxy-alpha-D-glucopyranoside + acetyl-CoA = mycothiol + CoA + H(+). In terms of biological role, catalyzes the transfer of acetyl from acetyl-CoA to desacetylmycothiol (Cys-GlcN-Ins) to form mycothiol. This Thermomonospora curvata (strain ATCC 19995 / DSM 43183 / JCM 3096 / KCTC 9072 / NBRC 15933 / NCIMB 10081 / Henssen B9) protein is Mycothiol acetyltransferase.